A 102-amino-acid chain; its full sequence is Pole-localizer protein TmaR (102 aa).

The stretch at 7–34 (IINQARRKNKLKRELQDNQKKIRDNQKR) forms a coiled coil.

It belongs to the pole-localizer TmaR family.

The protein resides in the cytoplasm. Its function is as follows. Pole-localizer protein involved in the regulation of several cellular processes. This chain is Pole-localizer protein TmaR, found in Aliivibrio fischeri (strain ATCC 700601 / ES114) (Vibrio fischeri).